Here is a 129-residue protein sequence, read N- to C-terminus: Cytochrome c oxidase subunit 5B, mitochondrial (129 aa).

A mitochondrion-targeting transit peptide spans M1–M31. N6-acetyllysine occurs at positions 68 and 86. The Zn(2+) site is built by C91, C93, C113, and C116. N6-acetyllysine is present on K121.

The protein belongs to the cytochrome c oxidase subunit 5B family. Component of the cytochrome c oxidase (complex IV, CIV), a multisubunit enzyme composed of 14 subunits. The complex is composed of a catalytic core of 3 subunits MT-CO1, MT-CO2 and MT-CO3, encoded in the mitochondrial DNA, and 11 supernumerary subunits COX4I, COX5A, COX5B, COX6A, COX6B, COX6C, COX7A, COX7B, COX7C, COX8 and NDUFA4, which are encoded in the nuclear genome. The complex exists as a monomer or a dimer and forms supercomplexes (SCs) in the inner mitochondrial membrane with NADH-ubiquinone oxidoreductase (complex I, CI) and ubiquinol-cytochrome c oxidoreductase (cytochrome b-c1 complex, complex III, CIII), resulting in different assemblies (supercomplex SCI(1)III(2)IV(1) and megacomplex MCI(2)III(2)IV(2)).

The protein resides in the mitochondrion inner membrane. It participates in energy metabolism; oxidative phosphorylation. Component of the cytochrome c oxidase, the last enzyme in the mitochondrial electron transport chain which drives oxidative phosphorylation. The respiratory chain contains 3 multisubunit complexes succinate dehydrogenase (complex II, CII), ubiquinol-cytochrome c oxidoreductase (cytochrome b-c1 complex, complex III, CIII) and cytochrome c oxidase (complex IV, CIV), that cooperate to transfer electrons derived from NADH and succinate to molecular oxygen, creating an electrochemical gradient over the inner membrane that drives transmembrane transport and the ATP synthase. Cytochrome c oxidase is the component of the respiratory chain that catalyzes the reduction of oxygen to water. Electrons originating from reduced cytochrome c in the intermembrane space (IMS) are transferred via the dinuclear copper A center (CU(A)) of subunit 2 and heme A of subunit 1 to the active site in subunit 1, a binuclear center (BNC) formed by heme A3 and copper B (CU(B)). The BNC reduces molecular oxygen to 2 water molecules using 4 electrons from cytochrome c in the IMS and 4 protons from the mitochondrial matrix. The protein is Cytochrome c oxidase subunit 5B, mitochondrial (Cox5b) of Rattus norvegicus (Rat).